The sequence spans 571 residues: Proline--tRNA ligase (571 aa).

This sequence belongs to the class-II aminoacyl-tRNA synthetase family. ProS type 1 subfamily. Homodimer.

It localises to the cytoplasm. The enzyme catalyses tRNA(Pro) + L-proline + ATP = L-prolyl-tRNA(Pro) + AMP + diphosphate. Catalyzes the attachment of proline to tRNA(Pro) in a two-step reaction: proline is first activated by ATP to form Pro-AMP and then transferred to the acceptor end of tRNA(Pro). As ProRS can inadvertently accommodate and process non-cognate amino acids such as alanine and cysteine, to avoid such errors it has two additional distinct editing activities against alanine. One activity is designated as 'pretransfer' editing and involves the tRNA(Pro)-independent hydrolysis of activated Ala-AMP. The other activity is designated 'posttransfer' editing and involves deacylation of mischarged Ala-tRNA(Pro). The misacylated Cys-tRNA(Pro) is not edited by ProRS. The chain is Proline--tRNA ligase from Azotobacter vinelandii (strain DJ / ATCC BAA-1303).